The chain runs to 218 residues: Large ribosomal subunit protein uL3 (218 aa).

The protein belongs to the universal ribosomal protein uL3 family. As to quaternary structure, part of the 50S ribosomal subunit. Forms a cluster with proteins L14 and L19.

One of the primary rRNA binding proteins, it binds directly near the 3'-end of the 23S rRNA, where it nucleates assembly of the 50S subunit. This Corynebacterium efficiens (strain DSM 44549 / YS-314 / AJ 12310 / JCM 11189 / NBRC 100395) protein is Large ribosomal subunit protein uL3.